We begin with the raw amino-acid sequence, 167 residues long: Type IV major pilin protein PilE (167 aa).

The propeptide at 1 to 7 (MNTLQKG) is leader sequence. Phenylalanine 8 is modified (N-methylphenylalanine). A helical transmembrane segment spans residues 8–28 (FTLIELMIVIAIVGILAAVAL). O-linked (GlcNAc...) serine glycosylation is present at serine 70. A disulfide bond links cysteine 127 and cysteine 160.

It belongs to the N-Me-Phe pilin family. As to quaternary structure, the pili are polar flexible filaments of about 5.4 nanometers diameter and 2.5 micrometers average length; they consist of only a single polypeptide chain arranged in a helical configuration of five subunits per turn in the assembled pilus.

The protein resides in the fimbrium. The protein localises to the membrane. Its function is as follows. Major component of the type IV pilus (T4P) that plays a role in cellular adherence, microcolony formation, resistance to neutrophil mediated killing, twitching motility as well as transformation. Mediates the attachment and the formation of bacterial microcolonies on host epithelial cells. Mechanistically, pili retractation induces host NF-kappa-B activation in infected cells, which is temporally associated with the formation of gonococcal microcolonies. This Neisseria gonorrhoeae protein is Type IV major pilin protein PilE (pilE).